A 350-amino-acid polypeptide reads, in one-letter code: Deoxyhypusine synthase-like protein (350 aa).

The protein belongs to the deoxyhypusine synthase family.

The chain is Deoxyhypusine synthase-like protein from Chlorobaculum tepidum (strain ATCC 49652 / DSM 12025 / NBRC 103806 / TLS) (Chlorobium tepidum).